The chain runs to 144 residues: Ribosomal RNA large subunit methyltransferase H (144 aa).

S-adenosyl-L-methionine contacts are provided by residues L63, G92, and 111–116 (LSPLTF).

It belongs to the RNA methyltransferase RlmH family. In terms of assembly, homodimer.

Its subcellular location is the cytoplasm. The catalysed reaction is pseudouridine(1915) in 23S rRNA + S-adenosyl-L-methionine = N(3)-methylpseudouridine(1915) in 23S rRNA + S-adenosyl-L-homocysteine + H(+). Specifically methylates the pseudouridine at position 1915 (m3Psi1915) in 23S rRNA. This is Ribosomal RNA large subunit methyltransferase H from Synechococcus sp. (strain CC9902).